We begin with the raw amino-acid sequence, 377 residues long: DNA-directed RNA polymerase subunit alpha (377 aa).

Positions 1–259 (MSDSSHNLLY…KHFSVFEKMD (259 aa)) are alpha N-terminal domain (alpha-NTD). The interval 276–377 (KDDILHKLVL…KIRLSKNTKG (102 aa)) is alpha C-terminal domain (alpha-CTD).

The protein belongs to the RNA polymerase alpha chain family. As to quaternary structure, homodimer. The RNAP catalytic core consists of 2 alpha, 1 beta, 1 beta' and 1 omega subunit. When a sigma factor is associated with the core the holoenzyme is formed, which can initiate transcription.

It catalyses the reaction RNA(n) + a ribonucleoside 5'-triphosphate = RNA(n+1) + diphosphate. Functionally, DNA-dependent RNA polymerase catalyzes the transcription of DNA into RNA using the four ribonucleoside triphosphates as substrates. The chain is DNA-directed RNA polymerase subunit alpha from Chlamydia trachomatis serovar A (strain ATCC VR-571B / DSM 19440 / HAR-13).